The sequence spans 168 residues: Lipoprotein signal peptidase (168 aa).

The next 3 membrane-spanning stretches (helical) occupy residues 8–28 (LYYL…WLVV), 61–81 (GQFW…VIYI), and 91–111 (FGIA…DRIF). Active-site residues include D117 and D135. A helical transmembrane segment spans residues 128–148 (FPIFNVADAALTIGVALMFIY).

It belongs to the peptidase A8 family.

The protein localises to the cell membrane. The catalysed reaction is Release of signal peptides from bacterial membrane prolipoproteins. Hydrolyzes -Xaa-Yaa-Zaa-|-(S,diacylglyceryl)Cys-, in which Xaa is hydrophobic (preferably Leu), and Yaa (Ala or Ser) and Zaa (Gly or Ala) have small, neutral side chains.. It functions in the pathway protein modification; lipoprotein biosynthesis (signal peptide cleavage). This protein specifically catalyzes the removal of signal peptides from prolipoproteins. The polypeptide is Lipoprotein signal peptidase (Anoxybacillus flavithermus (strain DSM 21510 / WK1)).